Here is a 130-residue protein sequence, read N- to C-terminus: Phosphoribosyl-AMP cyclohydrolase (130 aa).

Asp-80 contacts Mg(2+). Residue Cys-81 coordinates Zn(2+). The Mg(2+) site is built by Asp-82 and Asp-84. Zn(2+) contacts are provided by Cys-98 and Cys-105.

Belongs to the PRA-CH family. Homodimer. Mg(2+) is required as a cofactor. The cofactor is Zn(2+).

It is found in the cytoplasm. It carries out the reaction 1-(5-phospho-beta-D-ribosyl)-5'-AMP + H2O = 1-(5-phospho-beta-D-ribosyl)-5-[(5-phospho-beta-D-ribosylamino)methylideneamino]imidazole-4-carboxamide. Its pathway is amino-acid biosynthesis; L-histidine biosynthesis; L-histidine from 5-phospho-alpha-D-ribose 1-diphosphate: step 3/9. Functionally, catalyzes the hydrolysis of the adenine ring of phosphoribosyl-AMP. The protein is Phosphoribosyl-AMP cyclohydrolase of Oleidesulfovibrio alaskensis (strain ATCC BAA-1058 / DSM 17464 / G20) (Desulfovibrio alaskensis).